A 689-amino-acid polypeptide reads, in one-letter code: Protein asunder (689 aa).

A coiled-coil region spans residues 521–550; the sequence is NGARLKLSKAKDQYRLLYRELEQLIQLNAT. Disordered stretches follow at residues 592-619 and 665-689; these read PERL…SKRR and GTKD…SVRS. The segment covering 599 to 614 has biased composition (low complexity); sequence SSVGASGSSSSNSLLK. The Nuclear localization signal (NLS) signature appears at 613–619; it reads LKASKRR.

It belongs to the Integrator subunit 13 family. As to quaternary structure, belongs to the multiprotein complex Integrator, at least composed of IntS1, IntS2, IntS3, IntS4, omd/IntS5, IntS6, defl/IntS7, IntS8, IntS9, IntS10, IntS11, IntS12, asun/IntS13, IntS14 and IntS15. The core complex associates with protein phosphatase 2A subunits mts/PP2A and Pp2A-29B, to form the Integrator-PP2A (INTAC) complex. In terms of processing, phosphorylated. Expressed in nurse cells at stages 9-10 of oogenesis and exported to the oocyte. Also expressed in the follicle cells surrounding the oocyte.

It is found in the nucleus. The protein resides in the cytoplasm. The protein localises to the perinuclear region. Its function is as follows. Component of the integrator complex, a multiprotein complex that terminates RNA polymerase II (Pol II) transcription in the promoter-proximal region of genes. The integrator complex provides a quality checkpoint during transcription elongation by driving premature transcription termination of transcripts that are unfavorably configured for transcriptional elongation: the complex terminates transcription by (1) catalyzing dephosphorylation of the C-terminal domain (CTD) of Pol II subunit Polr2A/Rbp1 and Spt5, and (2) degrading the exiting nascent RNA transcript via endonuclease activity. The integrator complex is also involved in the 3'-end processing of the U7 snRNA, and also the spliceosomal snRNAs U1, U2, U4 and U5. Plays a role as a regulator of spermatogenesis. Crucial regulator of the mitotic cell cycle and development. Required for the correct dynein-dynactin perinuclear localization important for nucleus-centrosome coupling that occur upon meiotic progression of primary spermatocytes. Plays a role in sperm motility and fertility. May have a role in the PNG/PLU/GNU pathway. The protein is Protein asunder of Drosophila melanogaster (Fruit fly).